Consider the following 821-residue polypeptide: Maternal DNA replication licensing factor mcm6 (821 aa).

The segment at 159 to 186 adopts a C4-type zinc-finger fold; that stretch reads CMDCQSVVKDVEQQFRYTQPTICKNPVC. The 208-residue stretch at 347–554 folds into the MCM domain; it reads LYHNLCTSLF…TDYAIARRIV (208 aa). 397–404 provides a ligand contact to ATP; it reads GDPSTSKS. Residues 529-532 carry the Arginine finger motif; it reads SRFD.

The protein belongs to the MCM family. In terms of assembly, component of the mcm2-7 complex (RLF-M). The complex forms a toroidal hexameric ring with the proposed subunit order mcm2-mcm6-mcm4-mcm7-mcm3-mcm5. The heterodimer of mmcm3/mcm5 interacts with mcm4, mmcm6, mcm7 and weakly with mcm2. Component of the CMG helicase complex, composed of the mcm2-7 complex, the GINS complex and cdc45.

It localises to the nucleus. It is found in the chromosome. The catalysed reaction is ATP + H2O = ADP + phosphate + H(+). Acts as a component of the mcm2-7 complex (mcm complex) which is the putative replicative helicase essential for 'once per cell cycle' DNA replication initiation and elongation in eukaryotic cells. The active ATPase sites in the mcm2-7 ring are formed through the interaction surfaces of two neighboring subunits such that a critical structure of a conserved arginine finger motif is provided in trans relative to the ATP-binding site of the Walker A box of the adjacent subunit. The six ATPase active sites, however, are likely to contribute differentially to the complex helicase activity. The existence of maternal and zygotic forms of mcm3 and mcm6 suggests that specific forms of mcm2-7 complexes may be used during different stages of development. The chain is Maternal DNA replication licensing factor mcm6 from Xenopus tropicalis (Western clawed frog).